We begin with the raw amino-acid sequence, 642 residues long: 3D-(3,5/4)-trihydroxycyclohexane-1,2-dione hydrolase (642 aa).

A thiamine diphosphate-binding site is contributed by Glu71. The tract at residues 446 to 526 is thiamine pyrophosphate binding; sequence SLPGDVQRIW…INILVFDNSG (81 aa). Mg(2+) contacts are provided by Asp497 and Asn524.

It belongs to the TPP enzyme family. Mg(2+) serves as cofactor. Requires thiamine diphosphate as cofactor.

It carries out the reaction 3D-3,5/4-trihydroxycyclohexane-1,2-dione + H2O = 5-deoxy-D-glucuronate + H(+). The protein operates within polyol metabolism; myo-inositol degradation into acetyl-CoA; acetyl-CoA from myo-inositol: step 3/7. Involved in the cleavage of the C1-C2 bond of 3D-(3,5/4)-trihydroxycyclohexane-1,2-dione (THcHDO) to yield 5-deoxy-glucuronate (5DG). This Lacticaseibacillus casei (Lactobacillus casei) protein is 3D-(3,5/4)-trihydroxycyclohexane-1,2-dione hydrolase.